A 347-amino-acid chain; its full sequence is GTPase Obg (347 aa).

Positions M1–L159 constitute an Obg domain. Residues N127 to P146 are disordered. Residues R129–P138 are compositionally biased toward polar residues. One can recognise an OBG-type G domain in the interval A160–E334. GTP is bound by residues G166–S173, F191–Y195, D213–G216, N284–D287, and S315–A317. Mg(2+)-binding residues include S173 and T193.

Belongs to the TRAFAC class OBG-HflX-like GTPase superfamily. OBG GTPase family. As to quaternary structure, monomer. Mg(2+) serves as cofactor.

Its subcellular location is the cytoplasm. In terms of biological role, an essential GTPase which binds GTP, GDP and possibly (p)ppGpp with moderate affinity, with high nucleotide exchange rates and a fairly low GTP hydrolysis rate. Plays a role in control of the cell cycle, stress response, ribosome biogenesis and in those bacteria that undergo differentiation, in morphogenesis control. The sequence is that of GTPase Obg from Thioalkalivibrio sulfidiphilus (strain HL-EbGR7).